Reading from the N-terminus, the 299-residue chain is tRNA dimethylallyltransferase 2 (299 aa).

ATP is bound at residue 9-16 (GPTGVGKT). 11–16 (TGVGKT) is a substrate binding site. The tract at residues 34 to 37 (DSRQ) is interaction with substrate tRNA.

The protein belongs to the IPP transferase family. As to quaternary structure, monomer. Requires Mg(2+) as cofactor.

The enzyme catalyses adenosine(37) in tRNA + dimethylallyl diphosphate = N(6)-dimethylallyladenosine(37) in tRNA + diphosphate. Its function is as follows. Catalyzes the transfer of a dimethylallyl group onto the adenine at position 37 in tRNAs that read codons beginning with uridine, leading to the formation of N6-(dimethylallyl)adenosine (i(6)A). The polypeptide is tRNA dimethylallyltransferase 2 (Parabacteroides distasonis (strain ATCC 8503 / DSM 20701 / CIP 104284 / JCM 5825 / NCTC 11152)).